A 146-amino-acid chain; its full sequence is Hemoglobin subunit beta (146 aa).

Position 1 is an N-acetylvaline (V1). In terms of domain architecture, Globin spans 2–146; the sequence is HLTPEEKNAV…VANALAHKYH (145 aa). T12 carries the post-translational modification Phosphothreonine. At S44 the chain carries Phosphoserine. At K59 the chain carries N6-acetyllysine. H63 is a binding site for heme b. K82 carries the post-translational modification N6-acetyllysine. Residue H92 participates in heme b binding. S-nitrosocysteine is present on C93. K144 carries the post-translational modification N6-acetyllysine.

Belongs to the globin family. Heterotetramer of two alpha chains and two beta chains. As to expression, red blood cells.

Involved in oxygen transport from the lung to the various peripheral tissues. This is Hemoglobin subunit beta (HBB) from Theropithecus gelada (Gelada baboon).